The following is a 149-amino-acid chain: Large ribosomal subunit protein uL15 (149 aa).

Basic residues predominate over residues 1 to 29 (MVSHLKKTRKLRGHVSHGHGRVGKHRKGG). Residues 1-38 (MVSHLKKTRKLRGHVSHGHGRVGKHRKGGCRGGRGKAG) form a disordered region.

The protein belongs to the universal ribosomal protein uL15 family.

The protein is Large ribosomal subunit protein uL15 (RPL27A) of Tetrahymena thermophila.